We begin with the raw amino-acid sequence, 168 residues long: S-ribosylhomocysteine lyase (168 aa).

Residues His54, His58, and Cys128 each contribute to the Fe cation site.

This sequence belongs to the LuxS family. In terms of assembly, homodimer. Fe cation serves as cofactor.

It carries out the reaction S-(5-deoxy-D-ribos-5-yl)-L-homocysteine = (S)-4,5-dihydroxypentane-2,3-dione + L-homocysteine. Functionally, involved in the synthesis of autoinducer 2 (AI-2) which is secreted by bacteria and is used to communicate both the cell density and the metabolic potential of the environment. The regulation of gene expression in response to changes in cell density is called quorum sensing. Catalyzes the transformation of S-ribosylhomocysteine (RHC) to homocysteine (HC) and 4,5-dihydroxy-2,3-pentadione (DPD). The protein is S-ribosylhomocysteine lyase of Neisseria meningitidis serogroup C (strain 053442).